A 303-amino-acid chain; its full sequence is 2-dehydropantoate 2-reductase (303 aa).

NADP(+)-binding positions include 7–12 (GCGALG), asparagine 98, and alanine 122. Asparagine 98 lines the substrate pocket. Residue lysine 176 is the Proton donor of the active site. Substrate contacts are provided by asparagine 180, asparagine 184, asparagine 194, and serine 244. Residue glutamate 256 coordinates NADP(+).

Belongs to the ketopantoate reductase family. In terms of assembly, monomer.

The protein resides in the cytoplasm. The catalysed reaction is (R)-pantoate + NADP(+) = 2-dehydropantoate + NADPH + H(+). Its pathway is cofactor biosynthesis; (R)-pantothenate biosynthesis; (R)-pantoate from 3-methyl-2-oxobutanoate: step 2/2. Functionally, catalyzes the NADPH-dependent reduction of ketopantoate into pantoic acid. The sequence is that of 2-dehydropantoate 2-reductase (panE) from Escherichia coli O157:H7.